The following is a 296-amino-acid chain: Formamidopyrimidine-DNA glycosylase (296 aa).

The active-site Schiff-base intermediate with DNA is Pro-2. Glu-3 serves as the catalytic Proton donor. Lys-58 serves as the catalytic Proton donor; for beta-elimination activity. His-106, Arg-125, and Lys-168 together coordinate DNA. An FPG-type zinc finger spans residues 259–295 (RVYDRVGHACPTKGCTGRIGRIVQGGRSTFFCETCQV). Arg-285 serves as the catalytic Proton donor; for delta-elimination activity.

It belongs to the FPG family. In terms of assembly, monomer. The cofactor is Zn(2+).

The enzyme catalyses Hydrolysis of DNA containing ring-opened 7-methylguanine residues, releasing 2,6-diamino-4-hydroxy-5-(N-methyl)formamidopyrimidine.. It catalyses the reaction 2'-deoxyribonucleotide-(2'-deoxyribose 5'-phosphate)-2'-deoxyribonucleotide-DNA = a 3'-end 2'-deoxyribonucleotide-(2,3-dehydro-2,3-deoxyribose 5'-phosphate)-DNA + a 5'-end 5'-phospho-2'-deoxyribonucleoside-DNA + H(+). Functionally, involved in base excision repair of DNA damaged by oxidation or by mutagenic agents. Acts as a DNA glycosylase that recognizes and removes damaged bases. Has a preference for oxidized purines, such as 7,8-dihydro-8-oxoguanine (8-oxoG). Has AP (apurinic/apyrimidinic) lyase activity and introduces nicks in the DNA strand. Cleaves the DNA backbone by beta-delta elimination to generate a single-strand break at the site of the removed base with both 3'- and 5'-phosphates. The polypeptide is Formamidopyrimidine-DNA glycosylase (Methylorubrum populi (strain ATCC BAA-705 / NCIMB 13946 / BJ001) (Methylobacterium populi)).